Reading from the N-terminus, the 83-residue chain is Kunitz-type serine protease inhibitor nigrescinin-3 (83 aa).

Positions 1-24 are cleaved as a signal peptide; sequence MSSGGLLLLLGLLTLWEALTPVSS. The BPTI/Kunitz inhibitor domain occupies 31-81; that stretch reads CELPEDSGPCKGLFHVFYYNSDQNQRLEFIYGGCYGNANNFKTIEECKRTC. Disulfide bonds link Cys31–Cys81 and Cys40–Cys64.

Belongs to the venom Kunitz-type family. Expressed by the venom gland.

The protein resides in the secreted. In terms of biological role, serine protease inhibitor. The chain is Kunitz-type serine protease inhibitor nigrescinin-3 from Cryptophis nigrescens (Eastern small-eyed snake).